The primary structure comprises 89 residues: Bacterial microcompartment shell vertex protein GrpN (89 aa).

Positions 1–83 (MYLGKVIGTV…IDAAVVGIVD (83 aa)) constitute a BMV domain.

The protein belongs to the CcmL/EutN family. Homopentamer with a small central pore.

The protein localises to the bacterial microcompartment. Probably forms vertices in the bacterial microcompartment (BMC) predicted to be involved in glycyl radical-based 1,2-propanediol metabolism in this organism. The chain is Bacterial microcompartment shell vertex protein GrpN from Rhodospirillum rubrum (strain F11).